The primary structure comprises 251 residues: uncharacterized protein (251 aa).

The Response regulatory domain maps to 3-118 (KVIICDDERI…QLEHILDILV (116 aa)). Asp-55 bears the 4-aspartylphosphate mark. The region spanning 152–249 (NQILSQIKQH…HMSPSDYNKQ (98 aa)) is the HTH araC/xylS-type domain. 2 DNA-binding regions (H-T-H motif) span residues 169–190 (LDLI…KEHV) and 216–239 (HYEI…KKYL).

In terms of processing, phosphorylated by SERP2405.

It localises to the cytoplasm. Probable member of the two-component regulatory system SERP2405/SERP2406. This is an uncharacterized protein from Staphylococcus epidermidis (strain ATCC 35984 / DSM 28319 / BCRC 17069 / CCUG 31568 / BM 3577 / RP62A).